Consider the following 396-residue polypeptide: NADH-quinone oxidoreductase subunit D (396 aa).

The protein belongs to the complex I 49 kDa subunit family. As to quaternary structure, NDH-1 is composed of 14 different subunits. Subunits NuoB, C, D, E, F, and G constitute the peripheral sector of the complex.

Its subcellular location is the cell inner membrane. The catalysed reaction is a quinone + NADH + 5 H(+)(in) = a quinol + NAD(+) + 4 H(+)(out). NDH-1 shuttles electrons from NADH, via FMN and iron-sulfur (Fe-S) centers, to quinones in the respiratory chain. The immediate electron acceptor for the enzyme in this species is believed to be ubiquinone. Couples the redox reaction to proton translocation (for every two electrons transferred, four hydrogen ions are translocated across the cytoplasmic membrane), and thus conserves the redox energy in a proton gradient. The protein is NADH-quinone oxidoreductase subunit D of Brucella canis (strain ATCC 23365 / NCTC 10854 / RM-666).